The following is a 259-amino-acid chain: Heat-labile enterotoxin IIA, A chain (259 aa).

The signal sequence occupies residues 1–18 (MIKHVLLFFVFISFSVSA). Residue 23–37 (RADSRTPDEIRRAGG) coordinates NAD(+). Glutamate 128 is a catalytic residue. A disulfide bridge connects residues cysteine 203 and cysteine 215.

Belongs to the enterotoxin A family. In terms of assembly, heterohexamer of one A chain and of five B chains.

Functionally, the biological activity of the toxin is produced by the A chain, which activates intracellular adenyl cyclase. This is Heat-labile enterotoxin IIA, A chain from Escherichia coli.